Reading from the N-terminus, the 156-residue chain is Acyl carrier protein, mitochondrial (156 aa).

Residues 1–68 (MASRVLSAYV…GRVTQLCRQY (68 aa)) constitute a mitochondrion transit peptide. Residues 77–152 (EGIQDRVLYV…EIVDYIADKK (76 aa)) form the Carrier domain. The residue at position 88 (lysine 88) is an N6-acetyllysine. Serine 112 is modified (O-(pantetheine 4'-phosphoryl)serine).

It belongs to the acyl carrier protein (ACP) family. In terms of assembly, mammalian complex I is composed of 45 different subunits. Interacts with ETFRF1. Identified in a complex composed of MALSU1, MIEF1 upstream open reading frame protein and NDUFAB1; within the trimeric complex, MIEF1 upstream open reading frame protein functions as a bridging scaffold that interacts with MALSU1 on one side, and with NDUFAB1 on the other side. The complex interacts with the mitochondrial large ribosomal subunit. Interacts with alpha-1-microglobulin chain; this interaction is required for the maintenance of mitochondrial redox homeostasis. Component of the mitochondrial core iron-sulfur cluster (ISC) complex composed of NFS1, LYRM4, NDUFAB1, ISCU, FXN, and FDX2; this complex is a heterohexamer containing two copies of each monomer. Component of the cyteine desulfurase complex composed of NFS1, LYRM4 and NDUFAB1; this complex contributes to the stability and cysteine desulfurase activity of NFS1. Post-translationally, phosphopantetheinylation at Ser-112 is essential for interactions with LYR motif-containing proteins.

It localises to the mitochondrion. Functionally, carrier of the growing fatty acid chain in fatty acid biosynthesis. Accessory and non-catalytic subunit of the mitochondrial membrane respiratory chain NADH dehydrogenase (Complex I), which functions in the transfer of electrons from NADH to the respiratory chain. Accessory protein, of the core iron-sulfur cluster (ISC) assembly complex, that regulates, in association with LYRM4, the stability and the cysteine desulfurase activity of NFS1 and participates in the [2Fe-2S] clusters assembly on the scaffolding protein ISCU. The core iron-sulfur cluster (ISC) assembly complex is involved in the de novo synthesis of a [2Fe-2S] cluster, the first step of the mitochondrial iron-sulfur protein biogenesis. This process is initiated by the cysteine desulfurase complex (NFS1:LYRM4:NDUFAB1) that produces persulfide which is delivered on the scaffold protein ISCU in a FXN-dependent manner. Then this complex is stabilized by FDX2 which provides reducing equivalents to accomplish the [2Fe-2S] cluster assembly. Finally, the [2Fe-2S] cluster is transferred from ISCU to chaperone proteins, including HSCB, HSPA9 and GLRX5. The sequence is that of Acyl carrier protein, mitochondrial from Pongo pygmaeus (Bornean orangutan).